The chain runs to 185 residues: Ribosome-recycling factor (185 aa).

Belongs to the RRF family.

Its subcellular location is the cytoplasm. Responsible for the release of ribosomes from messenger RNA at the termination of protein biosynthesis. May increase the efficiency of translation by recycling ribosomes from one round of translation to another. This chain is Ribosome-recycling factor, found in Heliobacterium modesticaldum (strain ATCC 51547 / Ice1).